The following is a 247-amino-acid chain: Adenosylcobinamide-GDP ribazoletransferase (247 aa).

4 consecutive transmembrane segments (helical) span residues 34–54, 59–79, 113–133, and 194–214; these read IITF…VFMV, CGVP…TGGF, GGLA…ELAL, and VLLP…AIFI.

This sequence belongs to the CobS family. It depends on Mg(2+) as a cofactor.

The protein resides in the cell inner membrane. The enzyme catalyses alpha-ribazole + adenosylcob(III)inamide-GDP = adenosylcob(III)alamin + GMP + H(+). The catalysed reaction is alpha-ribazole 5'-phosphate + adenosylcob(III)inamide-GDP = adenosylcob(III)alamin 5'-phosphate + GMP + H(+). It functions in the pathway cofactor biosynthesis; adenosylcobalamin biosynthesis; adenosylcobalamin from cob(II)yrinate a,c-diamide: step 7/7. Its function is as follows. Joins adenosylcobinamide-GDP and alpha-ribazole to generate adenosylcobalamin (Ado-cobalamin). Also synthesizes adenosylcobalamin 5'-phosphate from adenosylcobinamide-GDP and alpha-ribazole 5'-phosphate. The sequence is that of Adenosylcobinamide-GDP ribazoletransferase from Escherichia coli (strain ATCC 8739 / DSM 1576 / NBRC 3972 / NCIMB 8545 / WDCM 00012 / Crooks).